Here is a 222-residue protein sequence, read N- to C-terminus: Peptide methionine sulfoxide reductase MsrA (222 aa).

The active site involves cysteine 60.

It belongs to the MsrA Met sulfoxide reductase family.

The enzyme catalyses L-methionyl-[protein] + [thioredoxin]-disulfide + H2O = L-methionyl-(S)-S-oxide-[protein] + [thioredoxin]-dithiol. The catalysed reaction is [thioredoxin]-disulfide + L-methionine + H2O = L-methionine (S)-S-oxide + [thioredoxin]-dithiol. Its function is as follows. Has an important function as a repair enzyme for proteins that have been inactivated by oxidation. Catalyzes the reversible oxidation-reduction of methionine sulfoxide in proteins to methionine. The protein is Peptide methionine sulfoxide reductase MsrA of Pseudomonas putida (strain GB-1).